The following is a 316-amino-acid chain: Solute carrier family 25 member 32 (316 aa).

Solcar repeat units lie at residues 20-109 (HVRY…IKSY), 118-209 (LEPL…LKLK), and 222-306 (LSTA…VSHF). A run of 6 helical transmembrane segments spans residues 26–46 (LVAG…LDLV), 89–106 (VWGA…YNAI), 123–143 (YLVS…PLWV), 185–203 (GFVP…FMAY), 227–243 (YISV…AATY), and 281–300 (GIAP…FVVY).

This sequence belongs to the mitochondrial carrier (TC 2.A.29) family.

The protein localises to the mitochondrion inner membrane. It carries out the reaction FAD(in) = FAD(out). Its function is as follows. Facilitates flavin adenine dinucleotide (FAD) translocation across the mitochondrial inner membrane into the mitochondrial matrix where it acts as a redox cofactor to assist flavoenzyme activities in fundamental metabolic processes including fatty acid beta-oxidation, amino acid and choline metabolism as well as mitochondrial electron transportation. In particular, provides FAD to DLD dehydrogenase of the glycine cleavage system, part of mitochondrial one-carbon metabolic pathway involved in neural tube closure in early embryogenesis. This Mus musculus (Mouse) protein is Solute carrier family 25 member 32.